The following is a 237-amino-acid chain: Small ribosomal subunit protein eS4 (237 aa).

The S4 RNA-binding domain maps to 37–100 (IPLAVLLRDV…NEYYRIIPDP (64 aa)).

The protein belongs to the eukaryotic ribosomal protein eS4 family.

This is Small ribosomal subunit protein eS4 from Caldivirga maquilingensis (strain ATCC 700844 / DSM 13496 / JCM 10307 / IC-167).